The sequence spans 366 residues: Protein-glutamate methylesterase/protein-glutamine glutaminase 2 (366 aa).

A Response regulatory domain is found at 3–119 (RLLIADDSAL…SLELDRLRPL (117 aa)). D53 carries the 4-aspartylphosphate modification. Positions 149-168 (AASSPRAKAARRGAARQRAK) are disordered. A compositionally biased stretch (basic residues) spans 156–166 (KAARRGAARQR). The region spanning 171-363 (PAPGLVLIGT…AAVIEWGNAD (193 aa)) is the CheB-type methylesterase domain. Catalysis depends on residues S181, H208, and D305.

This sequence belongs to the CheB family. Phosphorylated by CheA. Phosphorylation of the N-terminal regulatory domain activates the methylesterase activity.

The protein localises to the cytoplasm. The enzyme catalyses [protein]-L-glutamate 5-O-methyl ester + H2O = L-glutamyl-[protein] + methanol + H(+). It carries out the reaction L-glutaminyl-[protein] + H2O = L-glutamyl-[protein] + NH4(+). Its function is as follows. Involved in chemotaxis. Part of a chemotaxis signal transduction system that modulates chemotaxis in response to various stimuli. Catalyzes the demethylation of specific methylglutamate residues introduced into the chemoreceptors (methyl-accepting chemotaxis proteins or MCP) by CheR. Also mediates the irreversible deamidation of specific glutamine residues to glutamic acid. The sequence is that of Protein-glutamate methylesterase/protein-glutamine glutaminase 2 from Rhodopseudomonas palustris (strain BisB18).